The chain runs to 175 residues: Disulfide bond formation protein B (175 aa).

The Cytoplasmic portion of the chain corresponds to 1–13; the sequence is MTAFTRFAHSRAS. Residues 14 to 30 form a helical membrane-spanning segment; the sequence is WLILTGSAIALEAAALY. The Periplasmic segment spans residues 31–48; it reads FQYVMKLDPCVMCIYQRL. The cysteines at positions 40 and 43 are disulfide-linked. A helical membrane pass occupies residues 49–64; the sequence is AVFGILAAGLIGMTAP. Topologically, residues 65 to 71 are cytoplasmic; it reads KYRIVRI. The chain crosses the membrane as a helical span at residues 72-89; the sequence is LGALGWAVSATWGLKLAL. Topologically, residues 90 to 144 are periplasmic; that stretch reads ALVDMQNNPSPFSTCSFLPEFPAWMPLHEWFPSVMLPTGMCTDVPWQFMGVTMAE. Cys104 and Cys130 are oxidised to a cystine. The chain crosses the membrane as a helical span at residues 145–163; that stretch reads WMVVAFSGYLVALLLFIVP. The Cytoplasmic portion of the chain corresponds to 164–175; it reads ILSGSNKPSLYK.

Belongs to the DsbB family.

The protein localises to the cell inner membrane. Its function is as follows. Required for disulfide bond formation in some periplasmic proteins. Acts by oxidizing the DsbA protein. This chain is Disulfide bond formation protein B, found in Shewanella sp. (strain MR-4).